Consider the following 699-residue polypeptide: D-(-)-3-hydroxybutyrate oligomer hydrolase (699 aa).

The signal sequence occupies residues 1–33; the sequence is MTAIRGGSRRAPGLALALLGGVLLGACHGDENA. S311 functions as the Charge relay system in the catalytic mechanism.

It belongs to the D-(-)-3-hydroxybutyrate oligomer hydrolase family.

Its subcellular location is the secreted. It carries out the reaction (3R)-hydroxybutanoate dimer + H2O = 2 (R)-3-hydroxybutanoate + H(+). It functions in the pathway lipid metabolism; butanoate metabolism. Functionally, participates in the degradation of poly-3-hydroxybutyrate (PHB). It works downstream of poly(3-hydroxybutyrate) depolymerase, hydrolyzing D(-)-3-hydroxybutyrate oligomers of various length (3HB-oligomers) into 3HB-monomers. This Burkholderia pseudomallei (strain 1106a) protein is D-(-)-3-hydroxybutyrate oligomer hydrolase.